Reading from the N-terminus, the 498-residue chain is ATP synthase subunit beta, chloroplastic (498 aa).

172 to 179 (GGAGVGKT) contributes to the ATP binding site.

This sequence belongs to the ATPase alpha/beta chains family. As to quaternary structure, F-type ATPases have 2 components, CF(1) - the catalytic core - and CF(0) - the membrane proton channel. CF(1) has five subunits: alpha(3), beta(3), gamma(1), delta(1), epsilon(1). CF(0) has four main subunits: a(1), b(1), b'(1) and c(9-12).

The protein localises to the plastid. The protein resides in the chloroplast thylakoid membrane. It catalyses the reaction ATP + H2O + 4 H(+)(in) = ADP + phosphate + 5 H(+)(out). Its function is as follows. Produces ATP from ADP in the presence of a proton gradient across the membrane. The catalytic sites are hosted primarily by the beta subunits. The polypeptide is ATP synthase subunit beta, chloroplastic (Solanum tuberosum (Potato)).